A 401-amino-acid polypeptide reads, in one-letter code: MDSEFLELTQLLPRWVDLENVVRGEVEARYILKRAADHLANLRSGGDSGAEETGYLVGALVDRNWERIHTGHFSQVPLVTRKIYAIACCFKIFFLLLESTSPAQKDACSEILDEAQLLGCMEDWSELKVALMDYLDKDGAVALNSAPLPTLEPLTRVTSNCDIPQLDAPSLEEFQTKCFEAGQPTLLLNTIQHWPALHKWLDLNYLLQVAGNRTVPIEIGSNYASDEWSQQLVKIRDFLSRQFGKEPSKAGQNIEYLAQHELFAQIPALKEDISIPDYCTISNEDTPGAVDIKAWLGPAGTVSPMHYDPKHNLLCQVFGSKRIILAAPADTDNLYPHDSEFLANTARIDAAQLDPETYPLVAKVKFYQLLLQPGDCLYMPPKWWHYVRSEAPSFSVSFWWE.

The JmjC domain occupies 255 to 401; it reads EYLAQHELFA…PSFSVSFWWE (147 aa). Residues His306, Asp308, and His385 each coordinate Fe cation.

Requires Fe(2+) as cofactor. As to expression, expressed in neurons close to the dorsal lateral neurons involved in circadian rhythm.

It localises to the nucleus. It is found in the nucleoplasm. The protein resides in the cytoplasm. It carries out the reaction L-arginyl-[protein] + 2-oxoglutarate + O2 = (3R)-3-hydroxy-L-arginyl-[protein] + succinate + CO2. Its function is as follows. Bifunctional enzyme that acts both as an endopeptidase and 2-oxoglutarate-dependent monooxygenase. May be involved in regulation of behavior and circadian rhythms. The protein is Jumonji C domain-containing protein 5 of Drosophila melanogaster (Fruit fly).